Here is a 505-residue protein sequence, read N- to C-terminus: N-succinylglutamate 5-semialdehyde dehydrogenase (505 aa).

234–239 is an NAD(+) binding site; sequence GSAHTG. Catalysis depends on residues Glu-257 and Cys-291.

This sequence belongs to the aldehyde dehydrogenase family. AstD subfamily.

It catalyses the reaction N-succinyl-L-glutamate 5-semialdehyde + NAD(+) + H2O = N-succinyl-L-glutamate + NADH + 2 H(+). The protein operates within amino-acid degradation; L-arginine degradation via AST pathway; L-glutamate and succinate from L-arginine: step 4/5. Catalyzes the NAD-dependent reduction of succinylglutamate semialdehyde into succinylglutamate. The sequence is that of N-succinylglutamate 5-semialdehyde dehydrogenase from Yersinia pestis (strain Pestoides F).